A 59-amino-acid polypeptide reads, in one-letter code: MRACLKCKYLTNDEICPICHSPTSENWIGLLIVINPEKSEIAKKAGIDIKGKYALSVKE.

Zn(2+)-binding residues include Cys4, Cys7, Cys16, and Cys19.

The protein belongs to the archaeal Spt4 family. As to quaternary structure, heterodimer composed of Spt4 and Spt5.

Its function is as follows. Stimulates transcription elongation. The chain is Transcription elongation factor Spt4 from Methanocaldococcus jannaschii (strain ATCC 43067 / DSM 2661 / JAL-1 / JCM 10045 / NBRC 100440) (Methanococcus jannaschii).